A 355-amino-acid chain; its full sequence is MKFQNVHISHQDEDKEKLLPNDKDVEKADESPSSSRPSFVFKCYVIASMTFIWTAYTLTIKYTRSTVNPDMMYSSTSVVLCAEILKLVITFAMFYKECNFDSRQFSEQVSKYYINAPRELAKMSVPSFAYALQNNLDFVGLSNLDAGLYQVTTQLKVVSTAFFMMLFLGRKFSTRRWMAITLLMFGVAFVQMNNVSASEANTKRETAENYIVGLSAVLATCVTAGFAGVYFEKMLKDGGSTPFWIRNMQMYSCGVISASIACLTDFSRISDKGFFFGYTDKVWAVVILLGVGGLYISLVMRYLDNLYKSMASAVSIILVVVLSMLIFPDIFIGMYFVLGTICVVLAVLLYNSVNE.

The interval 1–36 is disordered; the sequence is MKFQNVHISHQDEDKEKLLPNDKDVEKADESPSSSR. Residues 9-30 show a composition bias toward basic and acidic residues; the sequence is SHQDEDKEKLLPNDKDVEKADE. A run of 6 helical transmembrane segments spans residues 40-60, 177-197, 211-231, 282-302, 309-329, and 330-350; these read VFKCYVIASMTFIWTAYTLTI, WMAITLLMFGVAFVQMNNVSA, IVGLSAVLATCVTAGFAGVYF, VWAVVILLGVGGLYISLVMRY, SMASAVSIILVVVLSMLIFPD, and IFIGMYFVLGTICVVLAVLLY.

Belongs to the nucleotide-sugar transporter family. SLC35A subfamily.

It is found in the membrane. Its subcellular location is the cytoplasmic granule membrane. The protein is UDP-galactose translocator 1 (ugtp-1) of Caenorhabditis elegans.